The sequence spans 209 residues: Pyridoxine/pyridoxamine 5'-phosphate oxidase (209 aa).

Substrate is bound by residues arginine 5–tyrosine 8 and lysine 63. Residues arginine 58–lysine 63, phenylalanine 73–threonine 74, arginine 79, lysine 80, and glutamine 102 each bind FMN. Substrate-binding residues include tyrosine 120, arginine 124, and serine 128. Residues glutamine 137–serine 138 and tryptophan 181 contribute to the FMN site. Residue arginine 187 to histidine 189 coordinates substrate. Arginine 191 is a binding site for FMN.

The protein belongs to the pyridoxamine 5'-phosphate oxidase family. In terms of assembly, homodimer. FMN serves as cofactor.

The enzyme catalyses pyridoxamine 5'-phosphate + O2 + H2O = pyridoxal 5'-phosphate + H2O2 + NH4(+). The catalysed reaction is pyridoxine 5'-phosphate + O2 = pyridoxal 5'-phosphate + H2O2. The protein operates within cofactor metabolism; pyridoxal 5'-phosphate salvage; pyridoxal 5'-phosphate from pyridoxamine 5'-phosphate: step 1/1. It participates in cofactor metabolism; pyridoxal 5'-phosphate salvage; pyridoxal 5'-phosphate from pyridoxine 5'-phosphate: step 1/1. In terms of biological role, catalyzes the oxidation of either pyridoxine 5'-phosphate (PNP) or pyridoxamine 5'-phosphate (PMP) into pyridoxal 5'-phosphate (PLP). In Alcanivorax borkumensis (strain ATCC 700651 / DSM 11573 / NCIMB 13689 / SK2), this protein is Pyridoxine/pyridoxamine 5'-phosphate oxidase.